We begin with the raw amino-acid sequence, 358 residues long: Carbamoyl phosphate synthase small chain (358 aa).

2 CPSase regions span residues 1–168 (MYNR…PALG) and 1–171 (MYNR…GRGR). The L-glutamine site is built by Ser46, Gly220, and Gly222. One can recognise a Glutamine amidotransferase type-1 domain in the interval 172–358 (RVVLVDLGMK…FIKNIDNNMK (187 aa)). Cys247 (nucleophile) is an active-site residue. The L-glutamine site is built by Met248, Gln251, Asn289, Gly291, and Tyr292. Active-site residues include His332 and Glu334.

This sequence belongs to the CarA family. As to quaternary structure, composed of two chains; the small (or glutamine) chain promotes the hydrolysis of glutamine to ammonia, which is used by the large (or ammonia) chain to synthesize carbamoyl phosphate. Tetramer of heterodimers (alpha,beta)4.

The catalysed reaction is hydrogencarbonate + L-glutamine + 2 ATP + H2O = carbamoyl phosphate + L-glutamate + 2 ADP + phosphate + 2 H(+). It carries out the reaction L-glutamine + H2O = L-glutamate + NH4(+). The protein operates within amino-acid biosynthesis; L-arginine biosynthesis; carbamoyl phosphate from bicarbonate: step 1/1. Its pathway is pyrimidine metabolism; UMP biosynthesis via de novo pathway; (S)-dihydroorotate from bicarbonate: step 1/3. In terms of biological role, small subunit of the glutamine-dependent carbamoyl phosphate synthetase (CPSase). CPSase catalyzes the formation of carbamoyl phosphate from the ammonia moiety of glutamine, carbonate, and phosphate donated by ATP, constituting the first step of 2 biosynthetic pathways, one leading to arginine and/or urea and the other to pyrimidine nucleotides. The small subunit (glutamine amidotransferase) binds and cleaves glutamine to supply the large subunit with the substrate ammonia. The polypeptide is Carbamoyl phosphate synthase small chain (Fusobacterium nucleatum subsp. nucleatum (strain ATCC 25586 / DSM 15643 / BCRC 10681 / CIP 101130 / JCM 8532 / KCTC 2640 / LMG 13131 / VPI 4355)).